A 642-amino-acid chain; its full sequence is Threonine--tRNA ligase (642 aa).

Residues 1–61 (MPVVTLPDGS…DSDANLAIIT (61 aa)) form the TGS domain. A catalytic region spans residues 243–534 (DHRKIGKQLD…LTEEYAGFFP (292 aa)). 3 residues coordinate Zn(2+): Cys-334, His-385, and His-511.

This sequence belongs to the class-II aminoacyl-tRNA synthetase family. In terms of assembly, homodimer. The cofactor is Zn(2+).

The protein resides in the cytoplasm. It catalyses the reaction tRNA(Thr) + L-threonine + ATP = L-threonyl-tRNA(Thr) + AMP + diphosphate + H(+). In terms of biological role, catalyzes the attachment of threonine to tRNA(Thr) in a two-step reaction: L-threonine is first activated by ATP to form Thr-AMP and then transferred to the acceptor end of tRNA(Thr). Also edits incorrectly charged L-seryl-tRNA(Thr). This chain is Threonine--tRNA ligase, found in Photorhabdus laumondii subsp. laumondii (strain DSM 15139 / CIP 105565 / TT01) (Photorhabdus luminescens subsp. laumondii).